Consider the following 501-residue polypeptide: ATP synthase subunit alpha (501 aa).

169 to 176 lines the ATP pocket; the sequence is GDRQTGKT.

It belongs to the ATPase alpha/beta chains family. F-type ATPases have 2 components, CF(1) - the catalytic core - and CF(0) - the membrane proton channel. CF(1) has five subunits: alpha(3), beta(3), gamma(1), delta(1), epsilon(1). CF(0) has three main subunits: a(1), b(2) and c(9-12). The alpha and beta chains form an alternating ring which encloses part of the gamma chain. CF(1) is attached to CF(0) by a central stalk formed by the gamma and epsilon chains, while a peripheral stalk is formed by the delta and b chains.

The protein resides in the cell membrane. The enzyme catalyses ATP + H2O + 4 H(+)(in) = ADP + phosphate + 5 H(+)(out). Produces ATP from ADP in the presence of a proton gradient across the membrane. The alpha chain is a regulatory subunit. The chain is ATP synthase subunit alpha from Streptococcus equi subsp. zooepidemicus (strain H70).